Consider the following 266-residue polypeptide: Elongation factor Ts (266 aa).

The segment at 80-83 (TDFV) is involved in Mg(2+) ion dislocation from EF-Tu.

Belongs to the EF-Ts family.

The protein resides in the cytoplasm. Its function is as follows. Associates with the EF-Tu.GDP complex and induces the exchange of GDP to GTP. It remains bound to the aminoacyl-tRNA.EF-Tu.GTP complex up to the GTP hydrolysis stage on the ribosome. The sequence is that of Elongation factor Ts from Buchnera aphidicola subsp. Baizongia pistaciae (strain Bp).